The sequence spans 58 residues: uncharacterized protein (58 aa).

The protein resides in the plastid. It is found in the chloroplast. This is an uncharacterized protein from Pyropia yezoensis (Susabi-nori).